Reading from the N-terminus, the 181-residue chain is 30 kDa heat shock protein (181 aa).

The region spanning 33-181 (ASVQSFAPRF…PPTAKKITIQ (149 aa)) is the sHSP domain. The span at 79–115 (GRSEREYHSSSDDNKNDQADTENQARGESSEVAKTGE) shows a compositional bias: basic and acidic residues. The segment at 79-127 (GRSEREYHSSSDDNKNDQADTENQARGESSEVAKTGEKQVSTKKAANKS) is disordered.

This sequence belongs to the small heat shock protein (HSP20) family.

The polypeptide is 30 kDa heat shock protein (hsp30) (Emericella nidulans (strain FGSC A4 / ATCC 38163 / CBS 112.46 / NRRL 194 / M139) (Aspergillus nidulans)).